Here is a 504-residue protein sequence, read N- to C-terminus: Chromosomal replication initiator protein DnaA (504 aa).

Residues M1–D109 form a domain I, interacts with DnaA modulators region. The tract at residues A98 to A162 is disordered. The span at D109–A125 shows a compositional bias: low complexity. The interval S110 to V163 is domain II. The segment at N164–A380 is domain III, AAA+ region. The ATP site is built by G208, G210, K211, and T212. Residues S381 to R504 are domain IV, binds dsDNA.

Belongs to the DnaA family. As to quaternary structure, oligomerizes as a right-handed, spiral filament on DNA at oriC.

The protein localises to the cytoplasm. Its function is as follows. Plays an essential role in the initiation and regulation of chromosomal replication. ATP-DnaA binds to the origin of replication (oriC) to initiate formation of the DNA replication initiation complex once per cell cycle. Binds the DnaA box (a 9 base pair repeat at the origin) and separates the double-stranded (ds)DNA. Forms a right-handed helical filament on oriC DNA; dsDNA binds to the exterior of the filament while single-stranded (ss)DNA is stabiized in the filament's interior. The ATP-DnaA-oriC complex binds and stabilizes one strand of the AT-rich DNA unwinding element (DUE), permitting loading of DNA polymerase. After initiation quickly degrades to an ADP-DnaA complex that is not apt for DNA replication. Binds acidic phospholipids. Functionally, the probable consensus sequence for the DnaA box of this bacterium is 5'-TT(G/C)TCCACA-3'. The sequence is that of Chromosomal replication initiator protein DnaA from Mycolicibacterium smegmatis (strain ATCC 700084 / mc(2)155) (Mycobacterium smegmatis).